We begin with the raw amino-acid sequence, 551 residues long: Cytosolic Fe-S cluster assembly factor NAR1 (551 aa).

C20, C57, C60, C63, C178, and C242 together coordinate [4Fe-4S] cluster. A disordered region spans residues 395–435 (DPSGHKKRSVRRVAALRSRGRKDSSSEDSTGTPSAISNALG). Positions 421 to 431 (EDSTGTPSAIS) are enriched in polar residues. C451 serves as a coordination point for [4Fe-4S] cluster.

Belongs to the NARF family.

Functionally, component of the cytosolic Fe/S protein assembly machinery. Required for maturation of extramitochondrial Fe/S proteins. May play a role in the transfer of pre-assembled Fe/S clusters to target apoproteins. The polypeptide is Cytosolic Fe-S cluster assembly factor NAR1 (NAR1) (Candida glabrata (strain ATCC 2001 / BCRC 20586 / JCM 3761 / NBRC 0622 / NRRL Y-65 / CBS 138) (Yeast)).